Reading from the N-terminus, the 318-residue chain is Ribose-phosphate pyrophosphokinase 2 (318 aa).

Position 96-101 (96-101 (RQDKKD)) interacts with ATP. Residues Asp-128, His-130, Asp-139, and Asp-143 each contribute to the Mg(2+) site. Residue His-130 participates in ATP binding. Residues 212–227 (KDRVAILVDDMADTCG) are binding of phosphoribosylpyrophosphate.

This sequence belongs to the ribose-phosphate pyrophosphokinase family. As to quaternary structure, homodimer. The active form is probably a hexamer composed of 3 homodimers. It depends on Mg(2+) as a cofactor.

It carries out the reaction D-ribose 5-phosphate + ATP = 5-phospho-alpha-D-ribose 1-diphosphate + AMP + H(+). It functions in the pathway metabolic intermediate biosynthesis; 5-phospho-alpha-D-ribose 1-diphosphate biosynthesis; 5-phospho-alpha-D-ribose 1-diphosphate from D-ribose 5-phosphate (route I): step 1/1. Its activity is regulated as follows. Activated by magnesium and inorganic phosphate. Competitively or non-competitively inhibited by ADP, 2,3-bisphosphoglyceride or GDP. In terms of biological role, catalyzes the synthesis of phosphoribosylpyrophosphate (PRPP) that is essential for nucleotide synthesis. The polypeptide is Ribose-phosphate pyrophosphokinase 2 (Prps2) (Mus musculus (Mouse)).